Consider the following 306-residue polypeptide: HORMA domain-containing protein 2 (306 aa).

The HORMA domain maps to 29 to 232 (HESLVVVKKL…SGFHSMKVKV (204 aa)). S271 is modified (phosphoserine).

In terms of assembly, interacts with HORMAD1. In terms of processing, phosphorylated in a SPO11-dependent manner. In terms of tissue distribution, specifically expressed in meiotic germ cells.

It is found in the nucleus. Its subcellular location is the chromosome. Functionally, essential for synapsis surveillance during meiotic prophase via the recruitment of ATR activity. Plays a key role in the male mid-pachytene checkpoint and the female meiotic prophase checkpoint: required for efficient build-up of ATR activity on unsynapsed chromosome regions, a process believed to form the basis of meiotic silencing of unsynapsed chromatin (MSUC) and meiotic prophase quality control in both sexes. Required for the DNA double-strand break-independent, BRCA1-dependent activation of ATR on the sex chromosomes that is essential for normal sex body formation. The polypeptide is HORMA domain-containing protein 2 (Hormad2) (Mus musculus (Mouse)).